Reading from the N-terminus, the 188-residue chain is UPF0200 protein M164_1169 (188 aa).

15 to 22 (GMPGSGKS) provides a ligand contact to ATP.

This sequence belongs to the UPF0200 family.

This is UPF0200 protein M164_1169 from Saccharolobus islandicus (strain M.16.4 / Kamchatka #3) (Sulfolobus islandicus).